The primary structure comprises 420 residues: Mitogen-activated protein kinase HOG2 (420 aa).

ATP-binding positions include 29–37 and lysine 52; that span reads VGMGAFGLV. Catalysis depends on aspartate 144, which acts as the Proton acceptor. Threonine 174 bears the Phosphothreonine mark. The short motif at 174–176 is the TXY element; sequence TGY. Position 176 is a phosphotyrosine (tyrosine 176). The disordered stretch occupies residues 372–394; the sequence is AQHHHQTQQQSSGKHTNPTTSSS.

This sequence belongs to the protein kinase superfamily. Ser/Thr protein kinase family. MAP kinase subfamily. HOG1 sub-subfamily. The cofactor is Mg(2+). Dually phosphorylated on Thr-174 and Tyr-176, which activates the enzyme.

It is found in the cytoplasm. The protein localises to the nucleus. It catalyses the reaction L-seryl-[protein] + ATP = O-phospho-L-seryl-[protein] + ADP + H(+). The catalysed reaction is L-threonyl-[protein] + ATP = O-phospho-L-threonyl-[protein] + ADP + H(+). Activated by tyrosine and threonine phosphorylation. In terms of biological role, mitogen-activated protein kinase involved in a signal transduction pathway that is activated by changes in the osmolarity of the extracellular environment. Controls osmotic regulation of transcription of target genes. This is Mitogen-activated protein kinase HOG2 (HOG2) from Zygosaccharomyces rouxii.